Reading from the N-terminus, the 224-residue chain is Large ribosomal subunit protein uL11c (224 aa).

A chloroplast-targeting transit peptide spans 1–66 (MAQPLVAAPS…SHRRLSIVAM (66 aa)). Residues lysine 75 and lysine 111 each carry the N6,N6,N6-trimethyllysine modification.

In terms of assembly, component of the chloroplast large ribosomal subunit (LSU). Mature 70S chloroplast ribosomes of higher plants consist of a small (30S) and a large (50S) subunit. The 30S small subunit contains 1 molecule of ribosomal RNA (16S rRNA) and 24 different proteins. The 50S large subunit contains 3 rRNA molecules (23S, 5S and 4.5S rRNA) and 33 different proteins.

The protein localises to the plastid. The protein resides in the chloroplast. Functionally, component of the chloroplast ribosome (chloro-ribosome), a dedicated translation machinery responsible for the synthesis of chloroplast genome-encoded proteins, including proteins of the transcription and translation machinery and components of the photosynthetic apparatus. This is Large ribosomal subunit protein uL11c (rpl11) from Spinacia oleracea (Spinach).